Here is a 446-residue protein sequence, read N- to C-terminus: Keratin, type I cytoskeletal 25 (446 aa).

Residues 1–20 are disordered; the sequence is MSLRLSSGSKRSYARPSTGS. Positions 1-74 are head; it reads MSLRLSSGSK…VNEGGLLSGN (74 aa). A coil 1A region spans residues 75-110; that stretch reads EKVTMQNLNDRLASYLDNVQALQEANADLEQKIKGW. Residues 75 to 390 form the IF rod domain; that stretch reads EKVTMQNLND…LLIGGDEGAC (316 aa). Positions 111 to 132 are linker 1; sequence YEKFGPGSCRGLDHDYSRYFPI. The interval 133-224 is coil 1B; it reads IDDLKNQIIT…KNHKEEMQAL (92 aa). The segment at 225-247 is linker 12; it reads QCAAGGNVNVEMNAAPGVDLTVL. The tract at residues 248-386 is coil 2; it reads LNNMRAEYEA…ETYCLLIGGD (139 aa). The tail stretch occupies residues 387–446; the sequence is EGACKSSSYKSKDYTSGNAGNQSKDSPKAIVVKKVLEEVDQRSKILTTRLHSLEEKSQSN. Residues 394–413 are disordered; it reads SYKSKDYTSGNAGNQSKDSP. The span at 400-410 shows a compositional bias: polar residues; sequence YTSGNAGNQSK. Position 438 is a phosphoserine (S438).

It belongs to the intermediate filament family. As to quaternary structure, heterodimer of a type I and a type II keratin. Heterodimer with type II keratin KRT5 leading to the formation of keratin intermediate filament (KIF) network. Interacts with KRT6A to form filaments.

The protein localises to the cytoplasm. Essential for the proper assembly of type I and type II keratin protein complexes and formation of keratin intermediate filaments in the inner root sheath (irs). Plays a role in the cytoskeleton organization. The sequence is that of Keratin, type I cytoskeletal 25 from Rattus norvegicus (Rat).